A 1193-amino-acid polypeptide reads, in one-letter code: uncharacterized protein (1193 aa).

The signal sequence occupies residues methionine 1 to serine 25. Topologically, residues aspartate 26 to threonine 1172 are extracellular. 18 N-linked (GlcNAc...) asparagine glycosylation sites follow: asparagine 90, asparagine 183, asparagine 226, asparagine 265, asparagine 281, asparagine 345, asparagine 357, asparagine 436, asparagine 516, asparagine 552, asparagine 583, asparagine 627, asparagine 712, asparagine 765, asparagine 822, asparagine 938, asparagine 1038, and asparagine 1092. Residues serine 1173–phenylalanine 1193 traverse the membrane as a helical segment.

Its subcellular location is the membrane. This is an uncharacterized protein from Dictyostelium discoideum (Social amoeba).